The following is a 744-amino-acid chain: NAD(P)H-quinone oxidoreductase subunit 5, chloroplastic (744 aa).

The next 16 helical transmembrane spans lie at 9-29, 40-60, 88-108, 125-145, 147-167, 185-205, 219-239, 258-278, 290-312, 327-347, 354-374, 396-416, 425-445, 548-568, 608-628, and 724-744; these read WIIP…LLLF, WAFQ…NLSI, LIDP…IMVL, FAYM…SNLI, IYIF…FWFT, GDFG…SFEF, NEVN…GAIA, TPIS…FLIA, IMNF…ALAQ, LGYM…FHLI, ALLF…VGYS, TAFL…CFWS, WLYS…TAFY, MLFP…LGIP, IFSV…YKPV, and YLFF…FLNF.

Belongs to the complex I subunit 5 family. NDH is composed of at least 16 different subunits, 5 of which are encoded in the nucleus.

The protein localises to the plastid. It localises to the chloroplast thylakoid membrane. The enzyme catalyses a plastoquinone + NADH + (n+1) H(+)(in) = a plastoquinol + NAD(+) + n H(+)(out). It catalyses the reaction a plastoquinone + NADPH + (n+1) H(+)(in) = a plastoquinol + NADP(+) + n H(+)(out). Functionally, NDH shuttles electrons from NAD(P)H:plastoquinone, via FMN and iron-sulfur (Fe-S) centers, to quinones in the photosynthetic chain and possibly in a chloroplast respiratory chain. The immediate electron acceptor for the enzyme in this species is believed to be plastoquinone. Couples the redox reaction to proton translocation, and thus conserves the redox energy in a proton gradient. The polypeptide is NAD(P)H-quinone oxidoreductase subunit 5, chloroplastic (ndhF) (Dampiera diversifolia (Blue dampiera)).